Consider the following 490-residue polypeptide: Glycogen synthase kinase-3 alpha (490 aa).

The span at Met1–Gly15 shows a compositional bias: gly residues. The interval Met1–Ser97 is disordered. Ser2 is subject to N-acetylserine. Ser2 is subject to Phosphoserine. Ser21 carries the post-translational modification Phosphoserine; by PKB/AKT1. Residues Pro25–Ala82 are compositionally biased toward gly residues. 3 positions are modified to phosphoserine: Ser72, Ser77, and Ser97. The Protein kinase domain maps to Tyr119–Phe404. ATP-binding positions include Ile125–Val133 and Lys148. The Proton acceptor role is filled by Asp244. At Tyr279 the chain carries Phosphotyrosine. Positions Gly451–Ser490 are disordered. Positions Pro455 to Asp480 are enriched in polar residues. A compositionally biased stretch (low complexity) spans Ala481–Ser490.

It belongs to the protein kinase superfamily. CMGC Ser/Thr protein kinase family. GSK-3 subfamily. As to quaternary structure, monomer. Interacts with AXIN1 and CTNNB1/beta-catenin. Interacts with ARRB2. Interacts with CTNND2. Interacts with LMBR1L. Interacts with DDX3X. Interacts with TNFRSF10B. Post-translationally, phosphorylated by AKT1 at Ser-21: upon insulin-mediated signaling, the activated PKB/AKT1 protein kinase phosphorylates and deactivates GSK3A, resulting in the dephosphorylation and activation of GYS1. Activated by phosphorylation at Tyr-279.

It carries out the reaction L-seryl-[tau protein] + ATP = O-phospho-L-seryl-[tau protein] + ADP + H(+). The catalysed reaction is L-threonyl-[tau protein] + ATP = O-phospho-L-threonyl-[tau protein] + ADP + H(+). It catalyses the reaction L-seryl-[protein] + ATP = O-phospho-L-seryl-[protein] + ADP + H(+). The enzyme catalyses L-threonyl-[protein] + ATP = O-phospho-L-threonyl-[protein] + ADP + H(+). With respect to regulation, activated by phosphorylation at Tyr-279. In response to insulin, inhibited by phosphorylation at Ser-21 by PKB/AKT1; phosphorylation at this site causes a conformational change, preventing access of substrates to the active site. Inhibited by lithium. Functionally, constitutively active protein kinase that acts as a negative regulator in the hormonal control of glucose homeostasis, Wnt signaling and regulation of transcription factors and microtubules, by phosphorylating and inactivating glycogen synthase (GYS1 or GYS2), CTNNB1/beta-catenin, APC and AXIN1. Requires primed phosphorylation of the majority of its substrates. Contributes to insulin regulation of glycogen synthesis by phosphorylating and inhibiting GYS1 activity and hence glycogen synthesis. Regulates glycogen metabolism in liver, but not in muscle. May also mediate the development of insulin resistance by regulating activation of transcription factors. In Wnt signaling, regulates the level and transcriptional activity of nuclear CTNNB1/beta-catenin. Facilitates amyloid precursor protein (APP) processing and the generation of APP-derived amyloid plaques found in Alzheimer disease. May be involved in the regulation of replication in pancreatic beta-cells. Is necessary for the establishment of neuronal polarity and axon outgrowth. Through phosphorylation of the anti-apoptotic protein MCL1, may control cell apoptosis in response to growth factors deprivation. Acts as a regulator of autophagy by mediating phosphorylation of KAT5/TIP60 under starvation conditions, activating KAT5/TIP60 acetyltransferase activity and promoting acetylation of key autophagy regulators, such as ULK1 and RUBCNL/Pacer. Negatively regulates extrinsic apoptotic signaling pathway via death domain receptors. Promotes the formation of an anti-apoptotic complex, made of DDX3X, BRIC2 and GSK3B, at death receptors, including TNFRSF10B. The anti-apoptotic function is most effective with weak apoptotic signals and can be overcome by stronger stimulation. The sequence is that of Glycogen synthase kinase-3 alpha (Gsk3a) from Mus musculus (Mouse).